A 521-amino-acid chain; its full sequence is Formate--tetrahydrofolate ligase (521 aa).

The protein belongs to the formate--tetrahydrofolate ligase family.

The catalysed reaction is (6S)-5,6,7,8-tetrahydrofolate + formate + ATP = (6R)-10-formyltetrahydrofolate + ADP + phosphate. Its pathway is one-carbon metabolism; tetrahydrofolate interconversion. The chain is Formate--tetrahydrofolate ligase from Ureaplasma parvum serovar 3 (strain ATCC 700970).